A 459-amino-acid polypeptide reads, in one-letter code: Exodeoxyribonuclease 7 large subunit (459 aa).

This sequence belongs to the XseA family. In terms of assembly, heterooligomer composed of large and small subunits.

The protein resides in the cytoplasm. The enzyme catalyses Exonucleolytic cleavage in either 5'- to 3'- or 3'- to 5'-direction to yield nucleoside 5'-phosphates.. In terms of biological role, bidirectionally degrades single-stranded DNA into large acid-insoluble oligonucleotides, which are then degraded further into small acid-soluble oligonucleotides. The chain is Exodeoxyribonuclease 7 large subunit from Pseudomonas aeruginosa (strain UCBPP-PA14).